The sequence spans 256 residues: Thiazole synthase (256 aa).

The active-site Schiff-base intermediate with DXP is the Lys-96. 1-deoxy-D-xylulose 5-phosphate is bound by residues Gly-157, 184–185 (AG), and 206–207 (NT).

This sequence belongs to the ThiG family. In terms of assembly, homotetramer. Forms heterodimers with either ThiH or ThiS.

It is found in the cytoplasm. It catalyses the reaction [ThiS sulfur-carrier protein]-C-terminal-Gly-aminoethanethioate + 2-iminoacetate + 1-deoxy-D-xylulose 5-phosphate = [ThiS sulfur-carrier protein]-C-terminal Gly-Gly + 2-[(2R,5Z)-2-carboxy-4-methylthiazol-5(2H)-ylidene]ethyl phosphate + 2 H2O + H(+). The protein operates within cofactor biosynthesis; thiamine diphosphate biosynthesis. Its function is as follows. Catalyzes the rearrangement of 1-deoxy-D-xylulose 5-phosphate (DXP) to produce the thiazole phosphate moiety of thiamine. Sulfur is provided by the thiocarboxylate moiety of the carrier protein ThiS. In vitro, sulfur can be provided by H(2)S. The chain is Thiazole synthase from Brucella anthropi (strain ATCC 49188 / DSM 6882 / CCUG 24695 / JCM 21032 / LMG 3331 / NBRC 15819 / NCTC 12168 / Alc 37) (Ochrobactrum anthropi).